A 261-amino-acid polypeptide reads, in one-letter code: Tryptophan synthase alpha chain (261 aa).

Residues E47 and D58 each act as proton acceptor in the active site.

Belongs to the TrpA family. Tetramer of two alpha and two beta chains.

It catalyses the reaction (1S,2R)-1-C-(indol-3-yl)glycerol 3-phosphate + L-serine = D-glyceraldehyde 3-phosphate + L-tryptophan + H2O. The protein operates within amino-acid biosynthesis; L-tryptophan biosynthesis; L-tryptophan from chorismate: step 5/5. In terms of biological role, the alpha subunit is responsible for the aldol cleavage of indoleglycerol phosphate to indole and glyceraldehyde 3-phosphate. This Neisseria meningitidis serogroup B (strain ATCC BAA-335 / MC58) protein is Tryptophan synthase alpha chain.